The following is a 92-amino-acid chain: Large ribosomal subunit protein uL24c (92 aa).

It belongs to the universal ribosomal protein uL24 family. As to quaternary structure, part of the 50S ribosomal subunit.

The protein localises to the plastid. It localises to the chloroplast. One of two assembly initiator proteins, it binds directly to the 5'-end of the 23S rRNA, where it nucleates assembly of the 50S subunit. This chain is Large ribosomal subunit protein uL24c (rpl24), found in Gracilaria tenuistipitata var. liui (Red alga).